An 82-amino-acid polypeptide reads, in one-letter code: MVTIRLARGGAKKRPFYQVVVTDSRNARDGRFIERVGFFNPIASGQAEALRLDLDRINHWVELGATVSDRVSALIKEAKKAA.

This sequence belongs to the bacterial ribosomal protein bS16 family.

The polypeptide is Small ribosomal subunit protein bS16 (Yersinia enterocolitica serotype O:8 / biotype 1B (strain NCTC 13174 / 8081)).